The following is a 717-amino-acid chain: Polyribonucleotide nucleotidyltransferase (717 aa).

Residues aspartate 486 and aspartate 492 each contribute to the Mg(2+) site. The 60-residue stretch at 553 to 612 folds into the KH domain; sequence PKIVQLQIDIDKISLVIGSTGKTVKAITDEFEVRVQIEQDGRITLFGTDSLKMQKAKAKI. In terms of domain architecture, S1 motif spans 622 to 715; it reads GEIYDGIVKK…KFGKIELELV (94 aa). The segment at 659–689 is disordered; the sequence is RYGDMRHSRYGSGRHSRYGRDNRNTFGMNPP. Residues 666 to 675 are compositionally biased toward basic residues; it reads SRYGSGRHSR.

The protein belongs to the polyribonucleotide nucleotidyltransferase family. Requires Mg(2+) as cofactor.

Its subcellular location is the cytoplasm. It catalyses the reaction RNA(n+1) + phosphate = RNA(n) + a ribonucleoside 5'-diphosphate. In terms of biological role, involved in mRNA degradation. Catalyzes the phosphorolysis of single-stranded polyribonucleotides processively in the 3'- to 5'-direction. In Borrelia hermsii (strain HS1 / DAH), this protein is Polyribonucleotide nucleotidyltransferase.